A 53-amino-acid polypeptide reads, in one-letter code: Rubredoxin 3 (53 aa).

Residues 1 to 53 (MQKWVCVPCGYEYDPADGDPENGIEPGTAFEDLPEDWVCPVCGVDKSFFEPVS) form the Rubredoxin-like domain. Fe cation is bound by residues Cys6, Cys9, Cys39, and Cys42.

This sequence belongs to the rubredoxin family. Monomer. Requires Fe(3+) as cofactor.

Its function is as follows. Functions as an electron acceptor for pyruvate ferredoxin oxidoreductase (PFOR). The protein is Rubredoxin 3 (rub3) of Chlorobaculum tepidum (strain ATCC 49652 / DSM 12025 / NBRC 103806 / TLS) (Chlorobium tepidum).